Here is a 783-residue protein sequence, read N- to C-terminus: Outer membrane usher protein FanD (783 aa).

The signal sequence occupies residues 1–23; the sequence is MNRKKHQILKILLLCLISSKSSA. An intrachain disulfide couples cysteine 763 to cysteine 782.

It belongs to the fimbrial export usher family.

The protein localises to the cell outer membrane. Its function is as follows. Involved in the export and assembly of K99 fimbrial subunits across the outer membrane. This chain is Outer membrane usher protein FanD (fanD), found in Escherichia coli.